Consider the following 119-residue polypeptide: Putative phosphoethanolamine transferase YjgX (119 aa).

2 helical membrane-spanning segments follow: residues 5–25 and 94–114; these read VFPVYHFLVSAAILVFVVIFW and LLLSLVRVCAGIICQCMTIPY.

Belongs to the phosphoethanolamine transferase family.

It is found in the cell inner membrane. This is Putative phosphoethanolamine transferase YjgX (yjgX) from Escherichia coli (strain K12).